A 487-amino-acid chain; its full sequence is Signal recognition particle subunit SRP54 (487 aa).

The tract at residues 1–295 (MVLSQLGSSL…DAESFVRKLL (295 aa)) is G-domain. GTP contacts are provided by residues 108–115 (GLQGAGKT), 190–194 (DTSGR), and 248–251 (TKLD). Positions 296-487 (GMGDLKGIAK…LGGTGKKGKK (192 aa)) are M-domain.

The protein belongs to the GTP-binding SRP family. SRP54 subfamily. In terms of assembly, component of a signal recognition particle (SRP) complex that consists of a 7SL RNA molecule of 300 nucleotides and six protein subunits: SRP72, SRP68, SRP54, SRP19, SRP14 and SRP9.

It is found in the cytoplasm. It localises to the endoplasmic reticulum. It catalyses the reaction GTP + H2O = GDP + phosphate + H(+). Functionally, component of the signal recognition particle (SRP) complex, a ribonucleoprotein complex that mediates the cotranslational targeting of secretory and membrane proteins to the endoplasmic reticulum (ER). As part of the SRP complex, associates with the SRP receptor (SR) component SRPRA to target secretory proteins to the endoplasmic reticulum membrane. Binds to the signal sequence of presecretory proteins when they emerge from the ribosomes. Displays basal GTPase activity, and stimulates reciprocal GTPase activation of the SR subunit SRPRA. Forms a guanosine 5'-triphosphate (GTP)-dependent complex with the SR subunit SRPRA. SR compaction and GTPase mediated rearrangement of SR drive SRP-mediated cotranslational protein translocation into the ER. Requires the presence of SRP9/SRP14 and/or SRP19 to stably interact with RNA. This Entamoeba histolytica (strain ATCC 30459 / HM-1:IMSS / ABRM) protein is Signal recognition particle subunit SRP54.